A 783-amino-acid polypeptide reads, in one-letter code: Polyribonucleotide nucleotidyltransferase 1, mitochondrial (783 aa).

The transit peptide at 1–46 (MAACRYCCSCLRLRPLSDGPFCLPGRDRALTQLLVRALWSSTGSRA) directs the protein to the mitochondrion. 4 positions are modified to N6-acetyllysine: Lys-250, Lys-264, Lys-285, and Lys-289. The residue at position 552 (Lys-552) is an N6-succinyllysine. Residues 605 to 664 (PVVETVQVPLSKRAKFVGPGGYNLKKLQAETGVTISQVDEETFSVFAPTPSALHEARDFI) form the KH domain. The 72-residue stretch at 679–750 (GAVYTATITE…ADGRMRLSRK (72 aa)) folds into the S1 motif domain. 2 positions are modified to phosphoserine: Ser-754 and Ser-782.

It belongs to the polyribonucleotide nucleotidyltransferase family. As to quaternary structure, homotrimer; in free form. Homooligomer. Component of the mitochondrial degradosome (mtEXO) complex which is a heteropentamer containing 2 copies of SUPV3L1 and 3 copies of PNPT1. As part of the mitochondrial degradosome complex, interacts with GRSF1 in an RNA-dependent manner; the interaction enhances the activity of the complex. Interacts with TCL1A; the interaction has no effect on PNPT1 exonuclease activity.

The protein resides in the cytoplasm. Its subcellular location is the mitochondrion matrix. It is found in the mitochondrion intermembrane space. The enzyme catalyses RNA(n+1) + phosphate = RNA(n) + a ribonucleoside 5'-diphosphate. In terms of biological role, RNA-binding protein implicated in numerous RNA metabolic processes. Catalyzes the phosphorolysis of single-stranded polyribonucleotides processively in the 3'-to-5' direction. Mitochondrial intermembrane factor with RNA-processing exoribonulease activity. Component of the mitochondrial degradosome (mtEXO) complex, that degrades 3' overhang double-stranded RNA with a 3'-to-5' directionality in an ATP-dependent manner. Involved in the degradation of non-coding mitochondrial transcripts (MT-ncRNA) and tRNA-like molecules. Required for correct processing and polyadenylation of mitochondrial mRNAs. Plays a role as a cytoplasmic RNA import factor that mediates the translocation of small RNA components like the 5S RNA, the RNA subunit of ribonuclease P and the mitochondrial RNA-processing (MRP) RNA, into the mitochondrial matrix. Plays a role in mitochondrial morphogenesis and respiration; regulates the expression of the electron transport chain (ETC) components at the mRNA and protein levels. In the cytoplasm, shows a 3'-to-5' exoribonuclease mediating mRNA degradation activity; degrades c-myc mRNA upon treatment with IFNB1/IFN-beta, resulting in a growth arrest in melanoma cells. Regulates the stability of specific mature miRNAs in melanoma cells; specifically and selectively degrades miR-221, preferentially. Also plays a role in RNA cell surveillance by cleaning up oxidized RNAs. Binds to the RNA subunit of ribonuclease P, MRP RNA and miR-221 microRNA. This Pongo abelii (Sumatran orangutan) protein is Polyribonucleotide nucleotidyltransferase 1, mitochondrial (PNPT1).